The following is a 250-amino-acid chain: 3-deoxy-manno-octulosonate cytidylyltransferase (250 aa).

Belongs to the KdsB family.

The protein localises to the cytoplasm. It catalyses the reaction 3-deoxy-alpha-D-manno-oct-2-ulosonate + CTP = CMP-3-deoxy-beta-D-manno-octulosonate + diphosphate. It participates in nucleotide-sugar biosynthesis; CMP-3-deoxy-D-manno-octulosonate biosynthesis; CMP-3-deoxy-D-manno-octulosonate from 3-deoxy-D-manno-octulosonate and CTP: step 1/1. It functions in the pathway bacterial outer membrane biogenesis; lipopolysaccharide biosynthesis. Its function is as follows. Activates KDO (a required 8-carbon sugar) for incorporation into bacterial lipopolysaccharide in Gram-negative bacteria. This chain is 3-deoxy-manno-octulosonate cytidylyltransferase, found in Francisella tularensis subsp. holarctica (strain LVS).